The chain runs to 289 residues: Probable 2-keto-3-deoxyxylonate dehydratase (289 aa).

The Mg(2+) site is built by Glu-144, Glu-146, and Asp-164.

It belongs to the FAH family.

The catalysed reaction is 2-dehydro-3-deoxy-D-arabinonate = 2,5-dioxopentanoate + H2O. It participates in carbohydrate metabolism; D-xylose degradation. Functionally, probable 2-keto-3-deoxyxylonate dehydratase involved in the degradation of D-xylose, a major component of hemicelluloses such as xylan. Catalyzes the fourth reaction in the xylose utilization pathway through dehydratation of 2-dehydro-3-deoxy-D-xylonate into alpha-ketoglutarate semialdehyde (2,5-dioxopentanoate). The sequence is that of Probable 2-keto-3-deoxyxylonate dehydratase from Haloferax volcanii (strain ATCC 29605 / DSM 3757 / JCM 8879 / NBRC 14742 / NCIMB 2012 / VKM B-1768 / DS2) (Halobacterium volcanii).